The following is a 288-amino-acid chain: Protein FANTASTIC FOUR 3 (288 aa).

Residues His48–Ala60 are compositionally biased toward basic and acidic residues. Disordered stretches follow at residues His48–Gln100, Glu146–Thr172, and Asn222–Val261. Residues Ser66 to Ser90 show a composition bias toward low complexity. The region spanning Asp165–Ile217 is the FAF domain. Residues Glu223–Met256 show a composition bias toward acidic residues.

Belongs to the fantastic four family. Expressed in the shoot apex, stamens, young leaves and young siliques, but not in old leaves. Detected in provascular and vascular tissue, but not in the vegetative meristem. In inflorescences, restricted to the vasculature and absent from young flowers, except from anthers.

In terms of biological role, able to repress WUS when constitutively overexpressed, but have no effect on CLV3. The protein is Protein FANTASTIC FOUR 3 (FAF3) of Arabidopsis thaliana (Mouse-ear cress).